Reading from the N-terminus, the 302-residue chain is CASP-like protein 4A2 (302 aa).

The segment covering 1 to 13 has biased composition (polar residues); sequence MALQAQQQATPSP. Positions 1–134 are disordered; the sequence is MALQAQQQAT…APPPHAQVRS (134 aa). Residues 1–154 lie on the Cytoplasmic side of the membrane; it reads MALQAQQQAT…RKRRAAVMQR (154 aa). A compositionally biased stretch (low complexity) spans 40–60; it reads VVVASTHHAAAAARYVPPRAT. Over residues 99–129 the composition is skewed to pro residues; that stretch reads KTPPPAPPLPAAPPPPPAASPAPAPRAPPPH. The chain crosses the membrane as a helical span at residues 155 to 175; that stretch reads AALLARAAAAGLCLAALAVLA. At 176-197 the chain is on the extracellular side; it reads SDTRRGWARDSYSNYAQFRYSE. A helical membrane pass occupies residues 198 to 218; that stretch reads AVNVVGFLYSVFQFVALAELM. Residues 219–238 are Cytoplasmic-facing; sequence RRNKHLIPHPKRDLFDFTMD. Residues 239–256 form a helical membrane-spanning segment; the sequence is QVVAYLLISSSSSATARA. The Extracellular portion of the chain corresponds to 257 to 273; the sequence is SDLIENWGSDSFPSMAN. Residues 274–294 form a helical membrane-spanning segment; sequence GSIAISFVAFVVFAICSLISA. Residues 295–302 lie on the Cytoplasmic side of the membrane; the sequence is YNLFRRDM.

Belongs to the Casparian strip membrane proteins (CASP) family. Homodimer and heterodimers.

It localises to the cell membrane. The polypeptide is CASP-like protein 4A2 (Zea mays (Maize)).